The sequence spans 233 residues: NAD-dependent protein deacylase (233 aa).

The Deacetylase sirtuin-type domain occupies 1-230; it reads MKNIMILSGA…ALDIENFMKD (230 aa). 9 to 28 contacts NAD(+); that stretch reads GAGLSAPSGLKTFRDNDGLW. Positions 53 and 56 each coordinate substrate. 88 to 91 lines the NAD(+) pocket; it reads QNVD. H106 functions as the Proton acceptor in the catalytic mechanism. C114, C117, C133, and C136 together coordinate Zn(2+). NAD(+) is bound by residues 172–174 and I213; that span reads GTS.

The protein belongs to the sirtuin family. Class III subfamily. The cofactor is Zn(2+).

It is found in the cytoplasm. It carries out the reaction N(6)-acetyl-L-lysyl-[protein] + NAD(+) + H2O = 2''-O-acetyl-ADP-D-ribose + nicotinamide + L-lysyl-[protein]. The enzyme catalyses N(6)-succinyl-L-lysyl-[protein] + NAD(+) + H2O = 2''-O-succinyl-ADP-D-ribose + nicotinamide + L-lysyl-[protein]. NAD-dependent lysine deacetylase and desuccinylase that specifically removes acetyl and succinyl groups on target proteins. Modulates the activities of several proteins which are inactive in their acylated form. In Campylobacter jejuni (strain RM1221), this protein is NAD-dependent protein deacylase.